A 272-amino-acid chain; its full sequence is Lectin-like protein At1g53070 (272 aa).

The N-terminal stretch at 1–23 (MKIQILCFTTLFLAIFTSQVTTA) is a signal peptide. Positions 24-271 (YKFKFDYFGN…RHEIWDWTFQ (248 aa)) are legume-lectin like. 3 N-linked (GlcNAc...) asparagine glycosylation sites follow: N33, N84, and N134. S241 carries the post-translational modification Phosphoserine.

Belongs to the leguminous lectin family.

It localises to the secreted. It is found in the extracellular space. The protein resides in the apoplast. In Arabidopsis thaliana (Mouse-ear cress), this protein is Lectin-like protein At1g53070.